We begin with the raw amino-acid sequence, 147 residues long: D-aminoacyl-tRNA deacylase (147 aa).

A Gly-cisPro motif, important for rejection of L-amino acids motif is present at residues 137–138; the sequence is GP.

Belongs to the DTD family. In terms of assembly, homodimer.

It is found in the cytoplasm. The enzyme catalyses glycyl-tRNA(Ala) + H2O = tRNA(Ala) + glycine + H(+). The catalysed reaction is a D-aminoacyl-tRNA + H2O = a tRNA + a D-alpha-amino acid + H(+). Its function is as follows. An aminoacyl-tRNA editing enzyme that deacylates mischarged D-aminoacyl-tRNAs. Also deacylates mischarged glycyl-tRNA(Ala), protecting cells against glycine mischarging by AlaRS. Acts via tRNA-based rather than protein-based catalysis; rejects L-amino acids rather than detecting D-amino acids in the active site. By recycling D-aminoacyl-tRNA to D-amino acids and free tRNA molecules, this enzyme counteracts the toxicity associated with the formation of D-aminoacyl-tRNA entities in vivo and helps enforce protein L-homochirality. This Bacillus licheniformis (strain ATCC 14580 / DSM 13 / JCM 2505 / CCUG 7422 / NBRC 12200 / NCIMB 9375 / NCTC 10341 / NRRL NRS-1264 / Gibson 46) protein is D-aminoacyl-tRNA deacylase.